Consider the following 340-residue polypeptide: Glyceraldehyde-3-phosphate dehydrogenase (340 aa).

Residues 11-12 (TI) and G109 contribute to the NAD(+) site. D-glyceraldehyde 3-phosphate is bound at residue 138 to 140 (SCN). C139 acts as the Nucleophile in catalysis. Residue R167 coordinates NAD(+). 193-194 (HA) provides a ligand contact to D-glyceraldehyde 3-phosphate. Residue Q300 coordinates NAD(+).

This sequence belongs to the glyceraldehyde-3-phosphate dehydrogenase family. Homotetramer.

Its subcellular location is the cytoplasm. It catalyses the reaction D-glyceraldehyde 3-phosphate + phosphate + NADP(+) = (2R)-3-phospho-glyceroyl phosphate + NADPH + H(+). It carries out the reaction D-glyceraldehyde 3-phosphate + phosphate + NAD(+) = (2R)-3-phospho-glyceroyl phosphate + NADH + H(+). The protein operates within carbohydrate degradation; glycolysis; pyruvate from D-glyceraldehyde 3-phosphate: step 1/5. The protein is Glyceraldehyde-3-phosphate dehydrogenase of Saccharolobus islandicus (strain Y.N.15.51 / Yellowstone #2) (Sulfolobus islandicus).